Here is a 938-residue protein sequence, read N- to C-terminus: Glutamate receptor ionotropic, NMDA 1 (938 aa).

The N-terminal stretch at 1–18 (MSTMHLLTFALLFSCSFA) is a signal peptide. Residues 19–559 (RAACDPKIVN…TLDSFMQPFQ (541 aa)) lie on the Extracellular side of the membrane. N-linked (GlcNAc...) asparagine glycosylation is found at N61, N203, N239, N276, N300, N350, N368, N440, N471, and N491. C79 and C308 are oxidised to a cystine. Cystine bridges form between C420/C454 and C436/C455. Glycine-binding residues include P516, T518, and R523. A helical transmembrane segment spans residues 560 to 580 (STLWLLVGLSVHVVAVMLYLL). At 581-602 (DRFSPFGRFKVNSEEEEEDALT) the chain is on the cytoplasmic side. The segment at residues 603 to 624 (LSSAMWFSWGVLLNSGIGEGAP) is an intramembrane region (discontinuously helical). The segment at 603-624 (LSSAMWFSWGVLLNSGIGEGAP) is pore-forming. Topologically, residues 625 to 630 (RSFSAR) are cytoplasmic. A helical transmembrane segment spans residues 631–647 (ILGMVWAGFAMIIVASY). Over 648-812 (TANLAAFLVL…NAPATLTFEN (165 aa)) the chain is Extracellular. N674 carries an N-linked (GlcNAc...) asparagine glycan. The glycine site is built by S688 and D732. C744 and C798 are oxidised to a cystine. N-linked (GlcNAc...) asparagine glycosylation is present at N771. The helical transmembrane segment at 813–833 (MAGVFMLVAGGIVAGIFLIFI) threads the bilayer. At 834–938 (EIAYKRHKDA…LQLCSRHRES (105 aa)) the chain is on the cytoplasmic side. Position 889 is a phosphoserine; by PKC (S889). The tract at residues 889–938 (SSFKRRRSSKDTSTGGGRGALQNQKDTVLPRRAIEREEGQLQLCSRHRES) is disordered. S890 carries the phosphoserine modification. Phosphoserine; by PKC is present on residues S896 and S897. The segment covering 916 to 927 (VLPRRAIEREEG) has biased composition (basic and acidic residues).

Belongs to the glutamate-gated ion channel (TC 1.A.10.1) family. NR1/GRIN1 subfamily. As to quaternary structure, heterotetramer; the NMDAR subunits are modular and harbor tiered domains that function in concert to regulate opening and closing of the cation-selective ion channel pore. Forms heterotetrameric channels composed of two GluN1/zeta subunits (GRIN1), and two identical GluN2/epsilon subunits (GRIN2A, GRIN2B, GRIN2C or GRIN2D) or GluN3 subunits (GRIN3A or GRIN3B) (in vitro). Can also form heterotetrameric channels that contain at least two GluN1 subunits and at least two different GluN2 subunits (or a combination of one GluN2 and one GluN3 subunits) (in vitro). In vivo, the subunit composition may vary in function of the expression levels of the different subunits. Found in a complex with GRIN2A or GRIN2B, GRIN3A and PPP2CB. Found in a complex with GRIN2A or GRIN2B and GRIN3B. Interacts with SNX27 (via PDZ domain); the interaction is required for recycling to the plasma membrane when endocytosed and prevent degradation in lysosomes. Interacts with DLG4 and MPDZ. Interacts with LRFN1 and LRFN2. Interacts with MYZAP. Found in a complex with DLG4 and PRR7. Found in a complex with GRIN2B and PRR7. Interacts with PRR7; the interaction is reduced following NMDA receptor activity. NMDA is probably regulated by C-terminal phosphorylation of an isoform of GRIN1 by PKC. Dephosphorylated on Ser-897 probably by protein phosphatase 2A (PPP2CB). Its phosphorylated state is influenced by the formation of the NMDAR-PPP2CB complex and the NMDAR channel activity. In terms of tissue distribution, detected in brain (at protein level). Detected in brain.

It localises to the cell membrane. Its subcellular location is the postsynaptic cell membrane. It is found in the postsynaptic density membrane. The protein localises to the synaptic cell membrane. It catalyses the reaction Ca(2+)(in) = Ca(2+)(out). The catalysed reaction is Na(+)(in) = Na(+)(out). It carries out the reaction K(+)(in) = K(+)(out). Component of N-methyl-D-aspartate (NMDA) receptors (NMDARs) that function as heterotetrameric, ligand-gated cation channels with high calcium permeability and voltage-dependent block by Mg(2+). NMDARs participate in synaptic plasticity for learning and memory formation by contributing to the long-term potentiation (LTP). Channel activation requires binding of the neurotransmitter L-glutamate to the GluN2 subunit, glycine or D-serine binding to the GluN1 subunit, plus membrane depolarization to eliminate channel inhibition by Mg(2+). NMDARs mediate simultaneously the potasium efflux and the influx of calcium and sodium. Each GluN2 or GluN3 subunit confers differential attributes to channel properties, including activation, deactivation and desensitization kinetics, pH sensitivity, Ca2(+) permeability, and binding to allosteric modulators. The polypeptide is Glutamate receptor ionotropic, NMDA 1 (Mus musculus (Mouse)).